A 453-amino-acid polypeptide reads, in one-letter code: Citrate (Re)-synthase (453 aa).

Residues 46–316 (IYITDTTFRD…TKNMKLHVIT (271 aa)) enclose the Pyruvate carboxyltransferase domain.

This sequence belongs to the alpha-IPM synthase/homocitrate synthase family. Mn(2+) is required as a cofactor. Requires Co(2+) as cofactor. The cofactor is Mg(2+).

The enzyme catalyses oxaloacetate + acetyl-CoA + H2O = citrate + CoA + H(+). Inhibited by p-chloromercuribenzoate (pCMB), EDTA, Zn(2+) ions, and under aerobic conditions. Catalyzes the condensation of the acetyl group of acetyl-CoA with oxaloacetate to form citrate. This enzyme is highly Re-face stereospecific with respect to the C-2 of oxaloacetate. This chain is Citrate (Re)-synthase, found in Clostridium kluyveri (strain ATCC 8527 / DSM 555 / NBRC 12016 / NCIMB 10680 / K1).